The sequence spans 452 residues: Septin-10 (452 aa).

In terms of domain architecture, Septin-type G spans 36–302 (QGFCFNILCV…ELYRRCKLQE (267 aa)). The tract at residues 46–53 (GETGIGKS) is G1 motif. GTP is bound by residues 46-53 (GETGIGKS), Gly-101, 182-190 (KADTISKSE), Gly-236, and Arg-251. Residues 98–101 (NTVG) form a G3 motif region. A G4 motif region spans residues 181-184 (AKAD). Ser-414 carries the post-translational modification Phosphoserine.

Belongs to the TRAFAC class TrmE-Era-EngA-EngB-Septin-like GTPase superfamily. Septin GTPase family. Septins polymerize into heterooligomeric protein complexes that form filaments, and can associate with cellular membranes, actin filaments and microtubules. GTPase activity is required for filament formation. Interacts with ADGB. In terms of processing, proteolytically cleaved in vitro in a calmodulin-dependent manner.

The protein localises to the cytoplasm. The protein resides in the cytoskeleton. Its subcellular location is the cell projection. It localises to the cilium. It is found in the flagellum. Filament-forming cytoskeletal GTPase. May play a role in cytokinesis (Potential). The polypeptide is Septin-10 (Mus musculus (Mouse)).